A 681-amino-acid chain; its full sequence is PTS system glucose-specific EIICBA component (681 aa).

One can recognise a PTS EIIC type-1 domain in the interval 3-414 (KKLFGQLQRI…LKYKTPGRED (412 aa)). 10 helical membrane passes run 16–36 (LMLP…GTAM), 73–93 (MIFA…AAIA), 126–146 (ILGI…GALA), 170–190 (FVPI…ALIW), 199–219 (AFST…FGFI), 273–293 (FMQG…LAIY), 303–323 (VVAG…ITEP), 328–348 (FLFV…LSFL), 355–375 (LHLG…GILP), and 383–403 (VIPV…FLIV). One can recognise a PTS EIIB type-1 domain in the interval 425-506 (TELPYAVLEA…QQIMNGQVVE (82 aa)). Cysteine 447 (phosphocysteine intermediate; for EIIB activity) is an active-site residue. A PTS EIIA type-1 domain is found at 551 to 655 (DQVFSEKMMG…SDITPIIVTQ (105 aa)). The active-site Tele-phosphohistidine intermediate; for EIIA activity is the histidine 603.

It localises to the cell membrane. It catalyses the reaction N(pros)-phospho-L-histidyl-[protein] + D-glucose(out) = D-glucose 6-phosphate(in) + L-histidyl-[protein]. The phosphoenolpyruvate-dependent sugar phosphotransferase system (sugar PTS), a major carbohydrate active transport system, catalyzes the phosphorylation of incoming sugar substrates concomitantly with their translocation across the cell membrane. This system is involved in glucose transport. This chain is PTS system glucose-specific EIICBA component (ptsG), found in Staphylococcus aureus (strain MRSA252).